The primary structure comprises 392 residues: Formate-dependent phosphoribosylglycinamide formyltransferase (392 aa).

N(1)-(5-phospho-beta-D-ribosyl)glycinamide-binding positions include 20 to 21 and Glu80; that span reads EL. Residues Arg112, Lys153, 158 to 163, 193 to 196, and Glu201 each bind ATP; these read SSGKGQ and EEFI. Residues 117–306 form the ATP-grasp domain; the sequence is RLAAEELGLP…EFELHVRAIL (190 aa). Glu265 and Glu277 together coordinate Mg(2+). N(1)-(5-phospho-beta-D-ribosyl)glycinamide contacts are provided by residues Asp284, Lys354, and 361 to 362; that span reads RR.

It belongs to the PurK/PurT family. In terms of assembly, homodimer.

It carries out the reaction N(1)-(5-phospho-beta-D-ribosyl)glycinamide + formate + ATP = N(2)-formyl-N(1)-(5-phospho-beta-D-ribosyl)glycinamide + ADP + phosphate + H(+). It functions in the pathway purine metabolism; IMP biosynthesis via de novo pathway; N(2)-formyl-N(1)-(5-phospho-D-ribosyl)glycinamide from N(1)-(5-phospho-D-ribosyl)glycinamide (formate route): step 1/1. Involved in the de novo purine biosynthesis. Catalyzes the transfer of formate to 5-phospho-ribosyl-glycinamide (GAR), producing 5-phospho-ribosyl-N-formylglycinamide (FGAR). Formate is provided by PurU via hydrolysis of 10-formyl-tetrahydrofolate. In Geobacter metallireducens (strain ATCC 53774 / DSM 7210 / GS-15), this protein is Formate-dependent phosphoribosylglycinamide formyltransferase.